The primary structure comprises 232 residues: uncharacterized protein (232 aa).

Positions 119–145 are disordered; sequence DEEYRENSKAPEAKARPSFVGEGRRLG. Over residues 123–133 the composition is skewed to basic and acidic residues; the sequence is RENSKAPEAKA.

This is an uncharacterized protein from Encephalitozoon cuniculi (strain GB-M1) (Microsporidian parasite).